The sequence spans 907 residues: MEVQLGLGRVYPRPPSKTYRGAFQNLFQSVREVIQNPGPRHPEAVSAAPPGAHLQQQQQQQQQQETSPRQQQQQQQGDDGSPQAQSRGPTGYLALDEEQQPSQQRSASKGHPESACVPEPGVTSATGKGLQQQQPAPPDENDSAAPSTLSLLGPTFPGLSSCSTDLKDILSEAGTMQLLQQQRQQQQQQQQQQQQQQQQQQQEVVSEGSSSGRAREAAGASTSSKDSYLGGSSTISDSAKELCKAVSVSMGLGVEALEHLSPGEQLRGDCMYAPLLGGPPAVRPCAPLAECKGSLLDDGPGKGTEETAEYSPFKAGYAKGLDGDSLGCSSSSEAGGSGTLEMPSTLSLYKSGALDEAAAYQSRDYYNFPLSLGGPPPHPPPPHPHTRIKLENPLDYGSAWAAAAAQCRYGDLASLHGAGAAGPSSGSPSATTSSSWHTLFTAEEGQLYGPCGGSGGGSAGDGGSVAPYGYTRPPQGLAGQEGDFPPPDVWYPGGVVSRVPFPSPSCVKSEMGSWMESYSGPYGDMRLETARDHVLPIDYYFPPQKTCLICGDEASGCHYGALTCGSCKVFFKRAAEGKQKYLCASRNDCTIDKFRRKNCPSCRLRKCYEAGMTLGARKLKKLGNLKLQEEGEASNVTSPTEEPTQKLTVSHIEGYECQPIFLNVLEAIEPGVVCAGHDNNQPDSFAALLSSLNELGERQLVHVVKWAKALPGFRNLHVDDQMAVIQYSWMGLMVFAMGWRSFTNVNSRMLYFAPDLVFNEYRMHKSRMYSQCVRMRHLSQEFGWLQITPQEFLCMKALLLFSIIPVDGLKNQKFFDELRMNYIKELDRIIACKRKNPTSCSRRFYQLTKLLDSVQPIARELHQFTFDLLIKSHMVSVDFPEMMAEIISVQVPKILSGKVKPIYFHTQ.

The interval 1–545 is modulating; it reads MEVQLGLGRV…PIDYYFPPQK (545 aa). The interval 1 to 574 is interaction with ZNF318; that stretch reads MEVQLGLGRV…GSCKVFFKRA (574 aa). Disordered regions lie at residues 36–152 and 200–231; these read NPGP…LSLL and QQQEVVSEGSSSGRAREAAGASTSSKDSYLGG. The span at 55–76 shows a compositional bias: low complexity; that stretch reads QQQQQQQQQQETSPRQQQQQQQ. Serine 67 is subject to Phosphoserine; by CDK9. A Phosphoserine modification is found at serine 81. The span at 123 to 134 shows a compositional bias: polar residues; sequence TSATGKGLQQQQ. The span at 200 to 224 shows a compositional bias: low complexity; it reads QQQEVVSEGSSSGRAREAAGASTSS. Position 228 is a phosphotyrosine; by CSK (tyrosine 228). A Phosphoserine modification is found at serine 261. The residue at position 272 (tyrosine 272) is a Phosphotyrosine; by CSK and TNK2. 4 positions are modified to phosphotyrosine; by CSK: tyrosine 310, tyrosine 349, tyrosine 360, and tyrosine 365. The residue at position 366 (tyrosine 366) is a Phosphotyrosine; by CSK and TNK2. Lysine 389 is covalently cross-linked (Glycyl lysine isopeptide (Lys-Gly) (interchain with G-Cter in SUMO)). Tyrosine 396 is modified (phosphotyrosine; by CSK). Lysine 508 is covalently cross-linked (Glycyl lysine isopeptide (Lys-Gly) (interchain with G-Cter in SUMO)). 2 positions are modified to phosphotyrosine; by CSK: tyrosine 522 and tyrosine 539. Residues 539–906 are interaction with LPXN; it reads YYFPPQKTCL…GKVKPIYFHT (368 aa). A DNA-binding region (nuclear receptor) is located at residues 546 to 619; the sequence is TCLICGDEAS…AGMTLGARKL (74 aa). 2 NR C4-type zinc fingers span residues 547–567 and 583–607; these read CLICGDEASGCHYGALTCGSC and CASRNDCTIDKFRRKNCPSCRLRKC. The interval 559–649 is interaction with HIPK3; sequence YGALTCGSCK…TEEPTQKLTV (91 aa). Positions 579 to 906 are interaction with CCAR1; it reads QKYLCASRND…GKVKPIYFHT (328 aa). The tract at residues 612–906 is interaction with KAT7; it reads MTLGARKLKK…GKVKPIYFHT (295 aa). Serine 638 is subject to Phosphoserine; by STK4/MST1. Residues 656–887 form the NR LBD domain; that stretch reads ECQPIFLNVL…DFPEMMAEII (232 aa). Positions 693 and 740 each coordinate 17beta-hydroxy-5alpha-androstan-3-one. Glycyl lysine isopeptide (Lys-Gly) (interchain with G-Cter in ubiquitin) cross-links involve residues lysine 833 and lysine 835. Threonine 865 lines the 17beta-hydroxy-5alpha-androstan-3-one pocket. Tyrosine 903 bears the Phosphotyrosine; by CSK mark.

The protein belongs to the nuclear hormone receptor family. NR3 subfamily. In terms of assembly, binds DNA as a homodimer. Part of a ternary complex containing AR, EFCAB6/DJBP and PARK7. Interacts with HIPK3 and NR0B2 in the presence of androgen. The ligand binding domain interacts with KAT7/HBO1 in the presence of dihydrotestosterone. Interacts with EFCAB6/DJBP, PQBP1, RANBP9, RBAK, SPDEF, SRA1, TGFB1I1 and RREB1. Interacts with ZMIZ1/ZIMP10 and ZMIZ2/ZMIP7 which both enhance its transactivation activity. Interacts with SLC30A9 and RAD54L2/ARIP4. Interacts with MACROD1 (via macro domain). Interacts via the ligand-binding domain with LXXLL and FXXLF motifs from NCOA1, NCOA2, NCOA3 and MAGEA11. Interacts (via nuclear receptor DNA binding domain and nuclear receptor ligand binding domain) with NCOA4. The AR N-terminal poly-Gln region binds Ran resulting in enhancement of AR-mediated transactivation. Ran-binding decreases as the poly-Gln length increases. Interacts with HIP1 (via coiled coil domain). Interacts (via ligand-binding domain) with TRIM68. Interacts with TNK2. Interacts with USP26. Interacts with RNF6. Interacts (regulated by RNF6 probably through polyubiquitination) with RNF14; regulates AR transcriptional activity. Interacts with PRMT2 and TRIM24. Interacts with RACK1. Interacts with RANBP10; this interaction enhances dihydrotestosterone-induced AR transcriptional activity. Interacts with PRPF6 in a hormone-independent way; this interaction enhances dihydrotestosterone-induced AR transcriptional activity. Interacts with STK4/MST1. Interacts with ZIPK/DAPK3. Interacts with LPXN. Interacts with MAK. Part of a complex containing AR, MAK and NCOA3. Interacts with CRY1. Interacts with CCAR1 and GATA2. Interacts with ZNF318. Interacts with BUD31. Interacts with ARID4A. Interacts with ARID4B. Interacts (via NR LBD domain) with ZBTB7A; the interaction is direct and androgen-dependent. Interacts with NCOR1. Interacts with NCOR2. Interacts witH CRY2 in a ligand-dependent manner. Post-translationally, phosphorylated in prostate cancer cells in response to several growth factors including EGF. Phosphorylation is induced by c-Src kinase (CSK). Tyr-522 is one of the major phosphorylation sites and an increase in phosphorylation and Src kinase activity is associated with prostate cancer progression. Phosphorylation by TNK2 enhances the DNA-binding and transcriptional activity. Phosphorylation at Ser-67 by CDK9 regulates AR promoter selectivity and cell growth. In terms of processing, sumoylated on Lys-389 (major) and Lys-508. Ubiquitinated. Deubiquitinated by USP26. 'Lys-6' and 'Lys-27'-linked polyubiquitination by RNF6 modulates AR transcriptional activity and specificity. Palmitoylated by ZDHHC7 and ZDHHC21. Palmitoylation is required for plasma membrane targeting and for rapid intracellular signaling via ERK and AKT kinases and cAMP generation.

The protein resides in the nucleus. It is found in the cytoplasm. In terms of biological role, steroid hormone receptors are ligand-activated transcription factors that regulate eukaryotic gene expression and affect cellular proliferation and differentiation in target tissues. Transcription factor activity is modulated by bound coactivator and corepressor proteins like ZBTB7A that recruits NCOR1 and NCOR2 to the androgen response elements/ARE on target genes, negatively regulating androgen receptor signaling and androgen-induced cell proliferation. Transcription activation is also down-regulated by NR0B2. Activated, but not phosphorylated, by HIPK3 and ZIPK/DAPK3. The polypeptide is Androgen receptor (AR) (Canis lupus familiaris (Dog)).